The chain runs to 31 residues: Cytochrome b6-f complex subunit 6 (31 aa).

Residues 3–23 traverse the membrane as a helical segment; sequence AIVAYIGFLALFTGIAAGLLF.

The protein belongs to the PetL family. As to quaternary structure, the 4 large subunits of the cytochrome b6-f complex are cytochrome b6, subunit IV (17 kDa polypeptide, PetD), cytochrome f and the Rieske protein, while the 4 small subunits are PetG, PetL, PetM and PetN. The complex functions as a dimer.

It is found in the cellular thylakoid membrane. Component of the cytochrome b6-f complex, which mediates electron transfer between photosystem II (PSII) and photosystem I (PSI), cyclic electron flow around PSI, and state transitions. PetL is important for photoautotrophic growth as well as for electron transfer efficiency and stability of the cytochrome b6-f complex. This is Cytochrome b6-f complex subunit 6 from Nostoc sp. (strain PCC 7120 / SAG 25.82 / UTEX 2576).